The sequence spans 497 residues: MSSLPWLTIIVLLPICAGLLIPLFPNEGNKIIRWYTLGICIIEFLLITYIFCCHFRINDQSLQLEEDYNWIDLINFHWRLGIDGLSMGLILLTGFVTTLATLAAWPVTRNTRLFHFLMLAMYSGQIGLFASQDILLFFFMWELELIPIYLLLSIWGGKRRLYSATKFILYTAGGSIFLLIGALTIGLYGNNGPLFDIQSLATRSYPIALEIIIYSGFLIAYAVKLPIFPFHTWLPDTHGEAHYSTCMLLAGILLKMGGYGLIRINMELLPHAHAIFAPWMVMFGAVQIVYASLISLNQRNLKRRIAYSSVSHMGFVMIGIGSLTNIGLNGAILQMISHGLTGAALFFLAGTSYDRTRTLFLDQLGGIAISMPKLFTMFSIFSLASLALPGMSGFVAELMVFLGIVISQNYSLTFKIVITIIEAIGIILTPIYLLSMLRQMFYGYKIPNTLALSLIDSGPREIFISLCLLLPIIGIGLYPNLVLSLWNSEVEYILSQY.

Helical transmembrane passes span 4–24, 35–55, 87–107, 113–133, 134–154, 167–187, 207–227, 242–262, 274–294, 313–333, 386–406, 416–436, and 462–482; these read LPWL…IPLF, YTLG…CCHF, MGLI…AWPV, LFHF…ASQD, ILLF…LLSI, FILY…TIGL, IALE…KLPI, HYST…YGLI, AIFA…ASLI, MGFV…GAIL, LALP…GIVI, IVIT…LLSM, and IFIS…PNLV.

Belongs to the complex I subunit 4 family.

Its subcellular location is the plastid. It is found in the chloroplast thylakoid membrane. It carries out the reaction a plastoquinone + NADH + (n+1) H(+)(in) = a plastoquinol + NAD(+) + n H(+)(out). It catalyses the reaction a plastoquinone + NADPH + (n+1) H(+)(in) = a plastoquinol + NADP(+) + n H(+)(out). The protein is NAD(P)H-quinone oxidoreductase chain 4, chloroplastic of Angiopteris evecta (Mule's foot fern).